Consider the following 405-residue polypeptide: Imidazolonepropionase (405 aa).

His73 and His75 together coordinate Fe(3+). Zn(2+)-binding residues include His73 and His75. Arg82, Tyr145, and His178 together coordinate 4-imidazolone-5-propanoate. Tyr145 lines the N-formimidoyl-L-glutamate pocket. Fe(3+) is bound at residue His243. His243 is a binding site for Zn(2+). Position 246 (Gln246) interacts with 4-imidazolone-5-propanoate. Asp318 contributes to the Fe(3+) binding site. Asp318 is a Zn(2+) binding site. The N-formimidoyl-L-glutamate site is built by Asn320 and Gly322. Thr323 is a binding site for 4-imidazolone-5-propanoate.

Belongs to the metallo-dependent hydrolases superfamily. HutI family. The cofactor is Zn(2+). Requires Fe(3+) as cofactor.

The protein resides in the cytoplasm. It catalyses the reaction 4-imidazolone-5-propanoate + H2O = N-formimidoyl-L-glutamate. Its pathway is amino-acid degradation; L-histidine degradation into L-glutamate; N-formimidoyl-L-glutamate from L-histidine: step 3/3. In terms of biological role, catalyzes the hydrolytic cleavage of the carbon-nitrogen bond in imidazolone-5-propanoate to yield N-formimidoyl-L-glutamate. It is the third step in the universal histidine degradation pathway. The sequence is that of Imidazolonepropionase from Brucella suis (strain ATCC 23445 / NCTC 10510).